The sequence spans 76 residues: DNA-directed RNA polymerase subunit epsilon (76 aa).

Belongs to the RNA polymerase subunit epsilon family. RNAP is composed of a core of 2 alpha, a beta and a beta' subunit. The core is associated with a delta subunit, and at least one of epsilon or omega. When a sigma factor is associated with the core the holoenzyme is formed, which can initiate transcription.

It carries out the reaction RNA(n) + a ribonucleoside 5'-triphosphate = RNA(n+1) + diphosphate. A non-essential component of RNA polymerase (RNAP). This Streptococcus equi subsp. equi (strain 4047) protein is DNA-directed RNA polymerase subunit epsilon.